A 293-amino-acid chain; its full sequence is Ribosomal protein L11 methyltransferase (293 aa).

Residues T145, G166, D188, and N230 each contribute to the S-adenosyl-L-methionine site.

It belongs to the methyltransferase superfamily. PrmA family.

The protein resides in the cytoplasm. The catalysed reaction is L-lysyl-[protein] + 3 S-adenosyl-L-methionine = N(6),N(6),N(6)-trimethyl-L-lysyl-[protein] + 3 S-adenosyl-L-homocysteine + 3 H(+). Methylates ribosomal protein L11. This chain is Ribosomal protein L11 methyltransferase, found in Salmonella heidelberg (strain SL476).